A 270-amino-acid polypeptide reads, in one-letter code: Coiled-coil domain-containing protein 3 (270 aa).

Positions 1-21 are cleaved as a signal peptide; sequence MLRQLLLAALCLAGPPAPARA. N-linked (GlcNAc...) asparagine glycosylation is present at N100. Positions 188–251 form a coiled coil; that stretch reads SVQKALFEEE…NQKLSEKLAA (64 aa).

As to quaternary structure, homodimer. Expressed in umbilical vein endothelial cells (HUVEC), and at lower levels in aortic smooth muscle cells (HASMC).

It is found in the secreted. In terms of biological role, negatively regulates TNF-alpha-induced pro-inflammatory response in endothelial cells (ECs) via inhibition of TNF-alpha-induced NF-kappaB activation in ECs. Positively regulates lipid accumulation in adipose cells. This chain is Coiled-coil domain-containing protein 3 (CCDC3), found in Homo sapiens (Human).